The sequence spans 397 residues: Glycine betaine/carnitine transport ATP-binding protein GbuA (397 aa).

The 237-residue stretch at 28-264 folds into the ABC transporter domain; it reads KSKTDILKET…PANEYVEKFI (237 aa). ATP is bound at residue 60–67; the sequence is GLSGSGKS. 2 CBS domains span residues 279–335 and 340–395; these read MIRP…NITS and LHRD…EVNV.

The protein belongs to the ABC transporter superfamily. In terms of assembly, the complex is composed of two ATP-binding proteins (GbuA), two transmembrane proteins (GbuB) and a solute-binding protein (GbuC).

It carries out the reaction a quaternary ammonium(out) + ATP + H2O = a quaternary ammonium(in) + ADP + phosphate + H(+). Its activity is regulated as follows. The complex is activated by an osmotic gradient or by low temperature. In terms of biological role, part of the ABC transporter complex GbuABC involved in glycine betaine uptake. Responsible for energy coupling to the transport system. Involved, with BetL and OpuC, in osmoprotection and cryoprotection of Listeria. Can also uptake carnitine when carnitine is abundant in the growth medium. The polypeptide is Glycine betaine/carnitine transport ATP-binding protein GbuA (gbuA) (Listeria monocytogenes serotype 1/2a (strain 10403S)).